Here is a 226-residue protein sequence, read N- to C-terminus: Thymidylate kinase (226 aa).

20–27 contacts ATP; that stretch reads GGEGAGKS.

This sequence belongs to the thymidylate kinase family.

The enzyme catalyses dTMP + ATP = dTDP + ADP. Phosphorylation of dTMP to form dTDP in both de novo and salvage pathways of dTTP synthesis. The chain is Thymidylate kinase from Bradyrhizobium sp. (strain BTAi1 / ATCC BAA-1182).